A 299-amino-acid chain; its full sequence is Non-structural protein V (299 aa).

The disordered stretch occupies residues 40-94; it reads SDNPGQDRATCKEEEAGSSGLSKPCLSAIGSTEGGAPRIRGQGSGESDDDAETLG. The interaction with host STAT1 stretch occupies residues 110–120; it reads YHVYDHSGEAV. The segment covering 133–143 has biased composition (low complexity); sequence SGLDGDSTLSG. Disordered regions lie at residues 133–168 and 204–229; these read SGLD…ITDR and PKLG…TPIK. Residues 144 to 160 are compositionally biased toward acidic residues; that stretch reads GDDESENSDVDIGEPDT. Residues histidine 232, cysteine 251, cysteine 255, cysteine 267, cysteine 269, cysteine 272, cysteine 276, and cysteine 279 each contribute to the Zn(2+) site.

It belongs to the paramyxoviruses V protein family. As to quaternary structure, interacts with host IFIH1/MDA5 and DHX58/LGP2; these interactions are involved in the inhibition of the host type I interferon signaling pathway. Interacts with host TYK2; this interaction inhibits the type I interferon signaling pathway without affecting the type II pathway. Interacts with host IRF7; this interaction inhibits IRF7 translocation to the nucleus. Interacts with host CHUK. Interacts with host RELA/p65; this interaction inhibits the nuclear translocation of NF-KappaB. Interacts (via N-terminus) with host STAT1 and JAK1; these interactions inhibit STAT1 phosphorylation by Jak1 and thereby the type I interferon signaling pathway. Interacts (via C-terminus) with host STAT2; this interaction is involved in the inhibition of the host type I interferon signaling pathway. Forms a complex with host PPP1CA and PPP1CC; this interaction prevents dephosphorylation of host IFIH1/MDA5 and leads to the inhibition of the host type I interferon signaling pathway. Interacts with host IRF9; this interaction prevents the binding of IRF9 to STAT2 and thereby the type I interferon signaling pathway. Interacts with host RIGI regulatory protein (via CARDs domain) and host TRIM25 (via SPRY domain); these interactions prevent TRIM25-mediated ubiquitination of RIG-I and disrupts downstream RIG-I signaling.

Its subcellular location is the host cytoplasm. Plays an essential role in the inhibition of host immune response. Prevents the establishment of cellular antiviral state by blocking interferon-alpha/beta (IFN-alpha/beta) production and signaling pathway. Interacts with host IFIH1/MDA5 and DHX58/LGP2 to inhibit the transduction pathway involved in the activation of IFN-beta promoter, thus protecting the virus against cell antiviral state. Blocks the type I interferon signaling pathway by interacting with host TYK2 and thereby inhibiting downstream STAT1 and STAT2 phosphorylation. Blocks the type I interferon signaling pathway by disrupting the RIG-I signaling pathway. Moderately affects the type II interferon signaling. Prevents PP1alpha/gamma-mediated dephosphorylation of host IFIH1/MDA5 and thus blocks its activation. The chain is Non-structural protein V (P/V) from Homo sapiens (Human).